An 839-amino-acid polypeptide reads, in one-letter code: Taste receptor type 1 member 2 (839 aa).

The N-terminal stretch at 1–19 (MGPRAKTICSLFFLLWVLA) is a signal peptide. Over 20-566 (EPAENSDFYL…VFLEWHEAPT (547 aa)) the chain is Extracellular. N-linked (GlcNAc...) asparagine glycosylation is found at N84, N248, N292, N312, N368, N407, N428, N487, and N527. A helical membrane pass occupies residues 567–587 (IAVALLAALGFLSTLAILVIF). At 588–602 (WRHFQTPIVRSAGGP) the chain is on the cytoplasmic side. A helical membrane pass occupies residues 603 to 623 (MCFLMLTLLLVAYMVVPVYVG). The Extracellular portion of the chain corresponds to 624-635 (PPKVSTCLCRQA). The helical transmembrane segment at 636–656 (LFPLCFTICISCIAVRSFQIV) threads the bilayer. Over 657-681 (CAFKMASRFPRAYSYWVRYQGPYVS) the chain is Cytoplasmic. A helical membrane pass occupies residues 682–702 (MAFITVLKMVIVVIGMLATGL). At 703–727 (SPTTRTDPDDPKITIVSCNPNYRNS) the chain is on the extracellular side. Residues 728 to 748 (LLFNTSLDLLLSVVGFSFAYM) form a helical membrane-spanning segment. The Cytoplasmic segment spans residues 749 to 760 (GKELPTNYNEAK). Residues 761-781 (FITLSMTFYFTSSVSLCTFMS) form a helical membrane-spanning segment. The Extracellular segment spans residues 782–784 (AYS). Residues 785–805 (GVLVTIVDLLVTVLNLLAISL) form a helical membrane-spanning segment. Over 806–839 (GYFGPKCYMILFYPERNTSAYFNSMIQGYTMRRD) the chain is Cytoplasmic.

Belongs to the G-protein coupled receptor 3 family. TAS1R subfamily. In terms of assembly, forms heterodimers with TAS1R3.

The protein localises to the cell membrane. Its function is as follows. Putative taste receptor. TAS1R2/TAS1R3 recognizes diverse natural and synthetic sweeteners. The polypeptide is Taste receptor type 1 member 2 (TAS1R2) (Pan troglodytes (Chimpanzee)).